The sequence spans 482 residues: Rho GTPase-activating protein 15 (482 aa).

Phosphoserine occurs at positions 51, 111, 205, 208, and 250. One can recognise a PH domain in the interval 87 to 198 (MVEKEGYLQK…WFHAIKNAID (112 aa)). The region spanning 288 to 477 (SHLHTVCERE…FMLTEYDKIF (190 aa)) is the Rho-GAP domain.

The protein localises to the cytoplasm. It localises to the membrane. In terms of biological role, GTPase activator for the Rho-type GTPases by converting them to an inactive GDP-bound state. Has activity toward RAC1. Overexpression results in an increase in actin stress fibers and cell contraction. The chain is Rho GTPase-activating protein 15 (Arhgap15) from Rattus norvegicus (Rat).